We begin with the raw amino-acid sequence, 221 residues long: Iron-sulfur cluster repair protein YtfE (221 aa).

This sequence belongs to the RIC family. YtfE subfamily. As to quaternary structure, homodimer.

Its subcellular location is the cytoplasm. Its function is as follows. Di-iron-containing protein involved in the repair of iron-sulfur clusters damaged by oxidative and nitrosative stress conditions. The polypeptide is Iron-sulfur cluster repair protein YtfE (Yersinia pseudotuberculosis serotype O:1b (strain IP 31758)).